We begin with the raw amino-acid sequence, 541 residues long: Glutamyl-tRNA(Gln) amidotransferase subunit B, mitochondrial (541 aa).

Belongs to the GatB/GatE family. GatB subfamily. As to quaternary structure, subunit of the heterotrimeric GatFAB amidotransferase (AdT) complex, composed of A, B and F subunits.

The protein localises to the mitochondrion. It carries out the reaction L-glutamyl-tRNA(Gln) + L-glutamine + ATP + H2O = L-glutaminyl-tRNA(Gln) + L-glutamate + ADP + phosphate + H(+). Allows the formation of correctly charged Gln-tRNA(Gln) through the transamidation of misacylated Glu-tRNA(Gln) in the mitochondria. The reaction takes place in the presence of glutamine and ATP through an activated gamma-phospho-Glu-tRNA(Gln). The polypeptide is Glutamyl-tRNA(Gln) amidotransferase subunit B, mitochondrial (Saccharomyces cerevisiae (strain YJM789) (Baker's yeast)).